The sequence spans 149 residues: Large ribosomal subunit protein bL20m (149 aa).

The N-terminal 9 residues, 1–9 (MVFLTTRLW), are a transit peptide targeting the mitochondrion.

Belongs to the bacterial ribosomal protein bL20 family. As to quaternary structure, component of the mitochondrial ribosome large subunit (39S) which comprises a 16S rRNA and about 50 distinct proteins. Interacts with OXA1L.

It is found in the mitochondrion. This Mus musculus (Mouse) protein is Large ribosomal subunit protein bL20m (Mrpl20).